The following is a 637-amino-acid chain: Putative pentatricopeptide repeat-containing protein At5g65820 (637 aa).

12 PPR repeats span residues 146 to 180 (SIEVYKSMVKILSKMRQFGAVWGLIEEMRKENPQL), 182 to 216 (EPELFVVLVQRFASADMVKKAIEVLDEMPKFGFEP), 217 to 247 (DEYVFGCLLDALCKHGSVKDAAKLFEDMRMR), 251 to 285 (NLRYFTSLLYGWCRVGKMMEAKYVLVQMNEAGFEP), 286 to 320 (DIVDYTNLLSGYANAGKMADAYDLLRDMRRRGFEP), 321 to 355 (NANCYTVLIQALCKVDRMEEAMKVFVEMERYECEA), 356 to 390 (DVVTYTALVSGFCKWGKIDKCYIVLDDMIKKGLMP), 391 to 425 (SELTYMHIMVAHEKKESFEECLELMEKMRQIEYHP), 426 to 460 (DIGIYNVVIRLACKLGEVKEAVRLWNEMEENGLSP), 461 to 495 (GVDTFVIMINGLASQGCLLEASDHFKEMVTRGLFS), 498 to 532 (QYGTLKLLLNTVLKDKKLEMAKDVWSCITSKGACE), and 534 to 568 (NVLSWTIWIHALFSKGYEKEACSYCIEMIEMDFMP). Positions 616 to 630 (QDLTEKAKSKQDREG) are enriched in basic and acidic residues. Residues 616 to 637 (QDLTEKAKSKQDREGKKKQRSR) form a disordered region.

This sequence belongs to the PPR family. P subfamily.

The sequence is that of Putative pentatricopeptide repeat-containing protein At5g65820 from Arabidopsis thaliana (Mouse-ear cress).